The chain runs to 573 residues: Estrogen receptor beta (573 aa).

Residues 15–170 form a modulating region; that stretch reads QEVDSSKVGE…CFAGKGDMHF (156 aa). NR C4-type zinc fingers lie at residues 171–191 and 207–231; these read CAVCHDYASGYHYGVWSCEGC and CPATNQCTIDKNRRKSCQACRLRKC. A DNA-binding region (nuclear receptor) is located at residues 171–236; sequence CAVCHDYASG…RLRKCYEVGM (66 aa). One can recognise an NR LBD domain in the interval 291–527; the sequence is TPEQLINRII…DLLLEMLDAN (237 aa). Composition is skewed to low complexity over residues 534–552 and 559–573; these read MSASYSSQPSPWSQAAQSQ and CSGECPCPPKESSTI. The interval 534–573 is disordered; it reads MSASYSSQPSPWSQAAQSQPGPPPSCSGECPCPPKESSTI.

The protein belongs to the nuclear hormone receptor family. NR3 subfamily. Binds DNA as a homodimer. Can form a heterodimer with ER-alpha. As to expression, liver.

The protein localises to the nucleus. Functionally, binds estrogens with an affinity similar to that of ER-alpha, and activates expression of reporter genes containing estrogen response elements (ERE) in an estrogen-dependent manner. This chain is Estrogen receptor beta (esr2), found in Anguilla japonica (Japanese eel).